The following is a 266-amino-acid chain: Protein phosphatase 1 regulatory subunit 35 (266 aa).

Residues 1-10 (MMVYNGSQLE) show a composition bias toward polar residues. The interval 1–118 (MMVYNGSQLE…QDLGTPVQQS (118 aa)) is disordered. A compositionally biased stretch (pro residues) spans 21-38 (PGPPPEPRAPEPGAPVPE). 2 positions are modified to phosphoserine: Ser-46 and Ser-51. Residues 62–79 (GRRKGRADRRGGARKGRQ) are compositionally biased toward basic residues. Positions 86–97 (PPSPVRSGPPPA) are enriched in pro residues.

This sequence belongs to the PPP1R35 family. Interacts with PPP1CA; this interaction mediates the PPP1CA phosphatase activity inhibition. Interacts with RTTN; this interaction allows the mutual recruitment to the centriole.

The protein resides in the cytoplasm. The protein localises to the cytoskeleton. Its subcellular location is the microtubule organizing center. It localises to the centrosome. It is found in the centriole. Functionally, during centriole duplication, plays a role in the centriole elongation by promoting the recruitment of the microtubule-binding elongation machinery through its interaction with RTTN, leading to the centriole to centrosome conversion. In addition may play a role in the primary cilia assembly. This chain is Protein phosphatase 1 regulatory subunit 35, found in Bos taurus (Bovine).